Consider the following 130-residue polypeptide: Small ribosomal subunit protein uS8 (130 aa).

This sequence belongs to the universal ribosomal protein uS8 family. Part of the 30S ribosomal subunit. Contacts proteins S5 and S12.

Functionally, one of the primary rRNA binding proteins, it binds directly to 16S rRNA central domain where it helps coordinate assembly of the platform of the 30S subunit. The sequence is that of Small ribosomal subunit protein uS8 from Pseudomonas aeruginosa (strain UCBPP-PA14).